A 332-amino-acid polypeptide reads, in one-letter code: Geranylgeranyl pyrophosphate synthase dpasD (332 aa).

Isopentenyl diphosphate contacts are provided by Lys55, Arg58, and His87. Mg(2+) contacts are provided by Asp94 and Asp98. Arg103 provides a ligand contact to dimethylallyl diphosphate. Arg104 contributes to the isopentenyl diphosphate binding site. Dimethylallyl diphosphate contacts are provided by Lys181, Thr182, and Gln215. Asp218 lines the Mg(2+) pocket. Positions 222, 232, and 242 each coordinate dimethylallyl diphosphate.

It belongs to the FPP/GGPP synthase family. Requires Mg(2+) as cofactor.

It catalyses the reaction isopentenyl diphosphate + dimethylallyl diphosphate = (2E)-geranyl diphosphate + diphosphate. The enzyme catalyses isopentenyl diphosphate + (2E)-geranyl diphosphate = (2E,6E)-farnesyl diphosphate + diphosphate. It carries out the reaction isopentenyl diphosphate + (2E,6E)-farnesyl diphosphate = (2E,6E,10E)-geranylgeranyl diphosphate + diphosphate. It participates in secondary metabolite biosynthesis; terpenoid biosynthesis. In terms of biological role, geranylgeranyl pyrophosphate synthase; part of the gene cluster that mediates the biosynthesis of the diterpenoid pyrones subglutinols A and B. The first step of the pathway is the synthesis of the alpha-pyrone moiety by the polyketide synthase dpasA via condensation of one acetyl-CoA starter unit with 3 malonyl-CoA units and 2 methylations. The alpha-pyrone is then combined with geranylgeranyl pyrophosphate (GGPP) formed by the GGPP synthase dpasD through the action of the prenyltransferase dpasC to yield a linear alpha-pyrone diterpenoid. Subsequent steps in the diterpenoid pyrone biosynthetic pathway involve the decalin core formation, which is initiated by the epoxidation of the C10-C11 olefin by the FAD-dependent oxidoreductase dpasE, and is followed by a cyclization cascade catalyzed by the terpene cyclase dpasB. The FAD-linked oxidoreductase dpasF is then involved in tetrahydrofuran (THF) ring formation at the C5 unit to complete the formation of subglutinols A and B. DpasF also possesses an additional catalytic ability of multi-step oxidations to generate a new DDP analog with an enone system at the C5 named FDDP A. This Apiospora sacchari (Arthrinium sacchari) protein is Geranylgeranyl pyrophosphate synthase dpasD.